The following is a 231-amino-acid chain: Large ribosomal subunit protein uL1 (231 aa).

It belongs to the universal ribosomal protein uL1 family. In terms of assembly, part of the 50S ribosomal subunit.

In terms of biological role, binds directly to 23S rRNA. The L1 stalk is quite mobile in the ribosome, and is involved in E site tRNA release. Its function is as follows. Protein L1 is also a translational repressor protein, it controls the translation of the L11 operon by binding to its mRNA. In Ruthia magnifica subsp. Calyptogena magnifica, this protein is Large ribosomal subunit protein uL1.